The primary structure comprises 460 residues: Fumarate hydratase class II (460 aa).

Substrate is bound by residues 95–97 (SGT), 126–129 (HPND), 136–138 (SSN), and threonine 184. Histidine 185 serves as the catalytic Proton donor/acceptor. Serine 315 is a catalytic residue. Residues serine 316 and 321–323 (KIN) contribute to the substrate site.

Belongs to the class-II fumarase/aspartase family. Fumarase subfamily. Homotetramer.

The protein localises to the cytoplasm. The catalysed reaction is (S)-malate = fumarate + H2O. It functions in the pathway carbohydrate metabolism; tricarboxylic acid cycle; (S)-malate from fumarate: step 1/1. Its function is as follows. Involved in the TCA cycle. Catalyzes the stereospecific interconversion of fumarate to L-malate. This is Fumarate hydratase class II from Chlamydia caviae (strain ATCC VR-813 / DSM 19441 / 03DC25 / GPIC) (Chlamydophila caviae).